The sequence spans 270 residues: 5'-AMP-activated protein kinase subunit beta-1 (270 aa).

The tract at residues 1–44 is disordered; sequence MGNTSSERAALERQAGHKTPRRDSSGGAKDGDRPKILMDSPEDA. Gly2 carries the N-myristoyl glycine lipid modification. At Thr4 the chain carries Phosphothreonine. Phosphoserine occurs at positions 5 and 6. A compositionally biased stretch (basic and acidic residues) spans 9–36; it reads AALERQAGHKTPRRDSSGGAKDGDRPKI. A Phosphothreonine modification is found at Thr19. Residues Ser24 and Ser25 each carry the phosphoserine; by autocatalysis modification. Residues Ser40, Ser96, and Ser101 each carry the phosphoserine modification. The glycogen-binding domain stretch occupies residues 68 to 163; that stretch reads EANDKAPAQA…QVKKTDFEVF (96 aa). Ser108 is modified (phosphoserine; by autocatalysis). Thr148 is subject to Phosphothreonine. Position 182 is a phosphoserine (Ser182). Lys201 carries the post-translational modification N6-succinyllysine.

The protein belongs to the 5'-AMP-activated protein kinase beta subunit family. In terms of assembly, AMPK is a heterotrimer of an alpha catalytic subunit (PRKAA1 or PRKAA2), a beta (PRKAB1 or PRKAB2) and a gamma non-catalytic subunits (PRKAG1, PRKAG2 or PRKAG3). Interacts with FNIP1 and FNIP2. Post-translationally, phosphorylated when associated with the catalytic subunit (PRKAA1 or PRKAA2). Phosphorylated by ULK1; leading to negatively regulate AMPK activity and suggesting the existence of a regulatory feedback loop between ULK1 and AMPK.

Functionally, non-catalytic subunit of AMP-activated protein kinase (AMPK), an energy sensor protein kinase that plays a key role in regulating cellular energy metabolism. In response to reduction of intracellular ATP levels, AMPK activates energy-producing pathways and inhibits energy-consuming processes: inhibits protein, carbohydrate and lipid biosynthesis, as well as cell growth and proliferation. AMPK acts via direct phosphorylation of metabolic enzymes, and by longer-term effects via phosphorylation of transcription regulators. Also acts as a regulator of cellular polarity by remodeling the actin cytoskeleton; probably by indirectly activating myosin. Beta non-catalytic subunit acts as a scaffold on which the AMPK complex assembles, via its C-terminus that bridges alpha (PRKAA1 or PRKAA2) and gamma subunits (PRKAG1, PRKAG2 or PRKAG3). In Mus musculus (Mouse), this protein is 5'-AMP-activated protein kinase subunit beta-1 (Prkab1).